Reading from the N-terminus, the 90-residue chain is UPF0297 protein Cthe_0151 (90 aa).

This sequence belongs to the UPF0297 family.

The protein is UPF0297 protein Cthe_0151 of Acetivibrio thermocellus (strain ATCC 27405 / DSM 1237 / JCM 9322 / NBRC 103400 / NCIMB 10682 / NRRL B-4536 / VPI 7372) (Clostridium thermocellum).